The following is a 332-amino-acid chain: Homoarginine-6-hydroxylase 2-ODD-C23.1 (332 aa).

One can recognise a Fe2OG dioxygenase domain in the interval proline 182–threonine 287. Fe cation-binding residues include histidine 210, aspartate 212, and histidine 268. Arginine 278 is a 2-oxoglutarate binding site.

The protein belongs to the iron/ascorbate-dependent oxidoreductase family. Fe(2+) serves as cofactor.

The protein resides in the cytoplasm. It is found in the cytosol. It catalyses the reaction L-homoarginine + 2-oxoglutarate + O2 = 6-hydroxy-L-homoarginine + succinate + CO2. With respect to regulation, slightly inhibited by canavanine (Can), the 5-oxa-analog of arginine. 2-oxoglutarate-dependent dioxygenase catalyzing homoarginine 6-hydroxylation thus producing 6-hydroxy-L-homoarginine. Guanidine (Gd) is in turn synthesized by the spontaneous conversion of 6-hydroxy-L-homoarginine to (S)-2-amino-6-oxohexanoate (RHEA:79843); guanidine is a nitrogen-rich compound that can serve as a defense or signaling substance. The protein is Homoarginine-6-hydroxylase 2-ODD-C23.1 of Arabidopsis thaliana (Mouse-ear cress).